Here is a 337-residue protein sequence, read N- to C-terminus: 4-hydroxy-3-methylbut-2-enyl diphosphate reductase (337 aa).

Cys38 is a [4Fe-4S] cluster binding site. His67 and His100 together coordinate (2E)-4-hydroxy-3-methylbut-2-enyl diphosphate. Positions 67 and 100 each coordinate dimethylallyl diphosphate. Positions 67 and 100 each coordinate isopentenyl diphosphate. Cys122 serves as a coordination point for [4Fe-4S] cluster. His150 is a binding site for (2E)-4-hydroxy-3-methylbut-2-enyl diphosphate. Residue His150 coordinates dimethylallyl diphosphate. Position 150 (His150) interacts with isopentenyl diphosphate. The Proton donor role is filled by Glu152. Thr190 is a binding site for (2E)-4-hydroxy-3-methylbut-2-enyl diphosphate. Cys220 provides a ligand contact to [4Fe-4S] cluster. Residues Ser248, Ser249, Asn250, and Ser293 each contribute to the (2E)-4-hydroxy-3-methylbut-2-enyl diphosphate site. Dimethylallyl diphosphate-binding residues include Ser248, Ser249, Asn250, and Ser293. Isopentenyl diphosphate contacts are provided by Ser248, Ser249, Asn250, and Ser293.

Belongs to the IspH family. It depends on [4Fe-4S] cluster as a cofactor.

The catalysed reaction is isopentenyl diphosphate + 2 oxidized [2Fe-2S]-[ferredoxin] + H2O = (2E)-4-hydroxy-3-methylbut-2-enyl diphosphate + 2 reduced [2Fe-2S]-[ferredoxin] + 2 H(+). It catalyses the reaction dimethylallyl diphosphate + 2 oxidized [2Fe-2S]-[ferredoxin] + H2O = (2E)-4-hydroxy-3-methylbut-2-enyl diphosphate + 2 reduced [2Fe-2S]-[ferredoxin] + 2 H(+). It participates in isoprenoid biosynthesis; dimethylallyl diphosphate biosynthesis; dimethylallyl diphosphate from (2E)-4-hydroxy-3-methylbutenyl diphosphate: step 1/1. Its pathway is isoprenoid biosynthesis; isopentenyl diphosphate biosynthesis via DXP pathway; isopentenyl diphosphate from 1-deoxy-D-xylulose 5-phosphate: step 6/6. Its function is as follows. Catalyzes the conversion of 1-hydroxy-2-methyl-2-(E)-butenyl 4-diphosphate (HMBPP) into a mixture of isopentenyl diphosphate (IPP) and dimethylallyl diphosphate (DMAPP). Acts in the terminal step of the DOXP/MEP pathway for isoprenoid precursor biosynthesis. This Mycolicibacterium vanbaalenii (strain DSM 7251 / JCM 13017 / BCRC 16820 / KCTC 9966 / NRRL B-24157 / PYR-1) (Mycobacterium vanbaalenii) protein is 4-hydroxy-3-methylbut-2-enyl diphosphate reductase.